We begin with the raw amino-acid sequence, 510 residues long: uncharacterized protein (510 aa).

12 consecutive transmembrane segments (helical) span residues 17 to 37, 56 to 76, 111 to 131, 148 to 168, 180 to 200, 223 to 243, 261 to 281, 300 to 320, 355 to 375, 382 to 402, 434 to 454, and 472 to 492; these read LKLG…LVVL, LIIH…ASVW, VLYI…ISPL, IVFI…AINI, LVNV…VCFG, LLFW…LIFI, FYLF…FGHI, YLGG…LVLM, IIKT…LIAI, LVIP…CMGY, AIYL…FSGI, and LLMG…LMFV.

The protein to A.aeolicus AQ_155.

Its subcellular location is the cell membrane. This is an uncharacterized protein from Rickettsia prowazekii (strain Madrid E).